A 184-amino-acid chain; its full sequence is Phosphopantetheine adenylyltransferase (184 aa).

S8 serves as a coordination point for substrate. ATP-binding positions include 8 to 9 (SF) and H16. Substrate is bound by residues K40, L74, and R88. ATP-binding positions include 89 to 91 (GLR), E99, and 123 to 129 (WSFVSST).

This sequence belongs to the bacterial CoaD family. Homohexamer. It depends on Mg(2+) as a cofactor.

The protein localises to the cytoplasm. The enzyme catalyses (R)-4'-phosphopantetheine + ATP + H(+) = 3'-dephospho-CoA + diphosphate. It participates in cofactor biosynthesis; coenzyme A biosynthesis; CoA from (R)-pantothenate: step 4/5. Reversibly transfers an adenylyl group from ATP to 4'-phosphopantetheine, yielding dephospho-CoA (dPCoA) and pyrophosphate. In Deinococcus geothermalis (strain DSM 11300 / CIP 105573 / AG-3a), this protein is Phosphopantetheine adenylyltransferase.